The chain runs to 154 residues: Transcriptional repressor NrdR (154 aa).

A zinc finger lies at 3 to 34 (CPFCRHPDSRVIDSRETDEGQAIRRRRSCPEC). In terms of domain architecture, ATP-cone spans 46-136 (LAVVKRSGVT…VYRSFSSADD (91 aa)).

Belongs to the NrdR family. Zn(2+) is required as a cofactor.

Its function is as follows. Negatively regulates transcription of bacterial ribonucleotide reductase nrd genes and operons by binding to NrdR-boxes. The polypeptide is Transcriptional repressor NrdR (Mycobacterium bovis (strain ATCC BAA-935 / AF2122/97)).